A 318-amino-acid polypeptide reads, in one-letter code: Ribose-phosphate pyrophosphokinase 2 (318 aa).

96–101 (RQDKKD) provides a ligand contact to ATP. Mg(2+) is bound by residues Asp-128, His-130, Asp-139, and Asp-143. Position 130 (His-130) interacts with ATP. Residues 212-227 (KDRVAILVDDMADTCG) form a binding of phosphoribosylpyrophosphate region.

It belongs to the ribose-phosphate pyrophosphokinase family. Homodimer. The active form is probably a hexamer composed of 3 homodimers. Requires Mg(2+) as cofactor.

It carries out the reaction D-ribose 5-phosphate + ATP = 5-phospho-alpha-D-ribose 1-diphosphate + AMP + H(+). It functions in the pathway metabolic intermediate biosynthesis; 5-phospho-alpha-D-ribose 1-diphosphate biosynthesis; 5-phospho-alpha-D-ribose 1-diphosphate from D-ribose 5-phosphate (route I): step 1/1. Activated by magnesium and inorganic phosphate. Competitively or non-competitively inhibited by ADP, 2,3-bisphosphoglyceride or GDP. In terms of biological role, catalyzes the synthesis of phosphoribosylpyrophosphate (PRPP) that is essential for nucleotide synthesis. This Mus musculus (Mouse) protein is Ribose-phosphate pyrophosphokinase 2 (Prps2).